The sequence spans 311 residues: Progestin and adipoQ receptor family member 3 (311 aa).

Residues 1–20 (MHQKLLKSAHYIELGSYQYW) are required for interaction with SREBF2. Topologically, residues 1–73 (MHQKLLKSAH…FILSNETVNI (73 aa)) are cytoplasmic. The segment at 41–60 (KDNPYITDGYRAYLPSRLCI) is required for interaction with SCAP. A golgi targeting region spans residues 61–71 (KSLFILSNETV). The chain crosses the membrane as a helical span at residues 74-96 (WSHLLGFFLFFTLGIYDMTSVLP). Topologically, residues 97-105 (SASASREDF) are lumenal. The chain crosses the membrane as a helical span at residues 106-128 (VICSICLFCFQVCMLCSVGYHLF). The Cytoplasmic portion of the chain corresponds to 129–140 (SCHRSEKTCRRW). Residues 141–163 (MALDYAGISIGILGCYVSGVFYA) traverse the membrane as a helical segment. Residues 164 to 172 (FYCNNYWRQ) lie on the Lumenal side of the membrane. The helical transmembrane segment at 173–195 (VYLITVLAMILAVFFAQIHPNYL) threads the bilayer. The Cytoplasmic portion of the chain corresponds to 196–201 (TQQWQR). A helical membrane pass occupies residues 202–224 (LRSIIFCSVSGYGVIPTLHWVWL). Residues 225–238 (NGGIGAPIVQDFAP) lie on the Lumenal side of the membrane. A helical membrane pass occupies residues 239 to 256 (RVIVMYMIALLAFLFYIS). The Cytoplasmic portion of the chain corresponds to 257 to 275 (KVPERYFPGQLNYLGSSHQ). Residues 276-298 (IWHILAVVMLYWWHQSTVYVMQY) form a helical membrane-spanning segment. Positions 299–303 (RHSKP) are golgi targeting. The Lumenal segment spans residues 299–311 (RHSKPCPDYVSHL).

It belongs to the ADIPOR family. Interacts with SCAP and SREBF2; the interactions are direct, increase in low cholesterol conditions and tether SCAP:SREBP complex to the Golgi apparatus. Interaction with SCAP is mutually exclusive with INSIG1. In hepatocytes, interacts with PPARA and HUWE1; the interactions promote PPARA poylubiquitination and HUWE1-mediated degradation. In macrophages, interacts with PPARG and STUB1; the interactions promote PPARG poylubiquitination and STUB1-mediated degradation. Widely expressed in a range of tissues.

The protein resides in the golgi apparatus membrane. Golgi-scaffold protein which modulates its interactors acitivies by anchoring them to the Golgi apparatus. Functions as a spatial regulator of RAF1 kinase by sequestrating it to the Golgi apparatus. Acts as a positive regulator of cholesterol biosynthesis by mediating the anchoring of the SCAP:SREBP complex in the Golgi apparatus, thereby promoting SCAP:SREBF2 complex formation, potentiating SREBF2 and SREBF1 processing and enhancing lipid synthesis. Also regulates PPARA and PPARG functions by mediating their interaction with E3 ubiquitin ligases, such as STUB1 or HUWE1, leading to their polyubiquitination and proteasome-mediated degradation. This is Progestin and adipoQ receptor family member 3 from Homo sapiens (Human).